Consider the following 353-residue polypeptide: Histidinol-phosphate aminotransferase (353 aa).

Lys218 bears the N6-(pyridoxal phosphate)lysine mark.

It belongs to the class-II pyridoxal-phosphate-dependent aminotransferase family. Histidinol-phosphate aminotransferase subfamily. As to quaternary structure, homodimer. Pyridoxal 5'-phosphate is required as a cofactor.

The enzyme catalyses L-histidinol phosphate + 2-oxoglutarate = 3-(imidazol-4-yl)-2-oxopropyl phosphate + L-glutamate. The protein operates within amino-acid biosynthesis; L-histidine biosynthesis; L-histidine from 5-phospho-alpha-D-ribose 1-diphosphate: step 7/9. The polypeptide is Histidinol-phosphate aminotransferase (Synechococcus sp. (strain JA-2-3B'a(2-13)) (Cyanobacteria bacterium Yellowstone B-Prime)).